The primary structure comprises 255 residues: 14-3-3-like protein B (255 aa).

This sequence belongs to the 14-3-3 family.

This is 14-3-3-like protein B from Nicotiana tabacum (Common tobacco).